The following is a 141-amino-acid chain: Large ribosomal subunit protein uL11 (141 aa).

The protein belongs to the universal ribosomal protein uL11 family. Part of the ribosomal stalk of the 50S ribosomal subunit. Interacts with L10 and the large rRNA to form the base of the stalk. L10 forms an elongated spine to which L12 dimers bind in a sequential fashion forming a multimeric L10(L12)X complex. One or more lysine residues are methylated.

In terms of biological role, forms part of the ribosomal stalk which helps the ribosome interact with GTP-bound translation factors. This is Large ribosomal subunit protein uL11 from Synechococcus sp. (strain RCC307).